The following is a 263-amino-acid chain: 3-methyl-2-oxobutanoate hydroxymethyltransferase (263 aa).

Mg(2+)-binding residues include Asp-45 and Asp-84. 3-methyl-2-oxobutanoate-binding positions include 45–46 (DS), Asp-84, and Lys-112. Position 114 (Glu-114) interacts with Mg(2+). The active-site Proton acceptor is Glu-181.

It belongs to the PanB family. Homodecamer; pentamer of dimers. The cofactor is Mg(2+).

The protein resides in the cytoplasm. It carries out the reaction 3-methyl-2-oxobutanoate + (6R)-5,10-methylene-5,6,7,8-tetrahydrofolate + H2O = 2-dehydropantoate + (6S)-5,6,7,8-tetrahydrofolate. The protein operates within cofactor biosynthesis; (R)-pantothenate biosynthesis; (R)-pantoate from 3-methyl-2-oxobutanoate: step 1/2. In terms of biological role, catalyzes the reversible reaction in which hydroxymethyl group from 5,10-methylenetetrahydrofolate is transferred onto alpha-ketoisovalerate to form ketopantoate. The protein is 3-methyl-2-oxobutanoate hydroxymethyltransferase of Photorhabdus laumondii subsp. laumondii (strain DSM 15139 / CIP 105565 / TT01) (Photorhabdus luminescens subsp. laumondii).